The primary structure comprises 263 residues: 4-hydroxy-2-oxo-heptane-1,7-dioate aldolase (263 aa).

His-45 (proton acceptor) is an active-site residue. A substrate-binding site is contributed by Gln-147. A divalent metal cation is bound at residue Glu-149. Substrate is bound by residues Ala-174 and Asp-175. A divalent metal cation is bound at residue Asp-175.

The protein belongs to the HpcH/HpaI aldolase family. In terms of assembly, homohexamer; trimer of dimers. A divalent metal cation is required as a cofactor.

The enzyme catalyses 4-hydroxy-2-oxoheptanedioate = succinate semialdehyde + pyruvate. It functions in the pathway aromatic compound metabolism; 4-hydroxyphenylacetate degradation; pyruvate and succinate semialdehyde from 4-hydroxyphenylacetate: step 7/7. Catalyzes the reversible retro-aldol cleavage of 4-hydroxy-2-ketoheptane-1,7-dioate (HKHD) to pyruvate and succinic semialdehyde. In Salmonella arizonae (strain ATCC BAA-731 / CDC346-86 / RSK2980), this protein is 4-hydroxy-2-oxo-heptane-1,7-dioate aldolase.